The primary structure comprises 867 residues: Leucine--tRNA ligase (867 aa).

The 'HIGH' region motif lies at 42–52 (PYPSGKLHMGH). Positions 631 to 635 (KMSKS) match the 'KMSKS' region motif. ATP is bound at residue Lys634.

This sequence belongs to the class-I aminoacyl-tRNA synthetase family.

The protein localises to the cytoplasm. The enzyme catalyses tRNA(Leu) + L-leucine + ATP = L-leucyl-tRNA(Leu) + AMP + diphosphate. This is Leucine--tRNA ligase from Dichelobacter nodosus (strain VCS1703A).